A 72-amino-acid chain; its full sequence is Translation initiation factor IF-1 (72 aa).

The S1-like domain occupies 1–72 (MAKEEPIEVE…TRGRIIYRTK (72 aa)).

This sequence belongs to the IF-1 family. As to quaternary structure, component of the 30S ribosomal translation pre-initiation complex which assembles on the 30S ribosome in the order IF-2 and IF-3, IF-1 and N-formylmethionyl-tRNA(fMet); mRNA recruitment can occur at any time during PIC assembly.

Its subcellular location is the cytoplasm. Its function is as follows. One of the essential components for the initiation of protein synthesis. Stabilizes the binding of IF-2 and IF-3 on the 30S subunit to which N-formylmethionyl-tRNA(fMet) subsequently binds. Helps modulate mRNA selection, yielding the 30S pre-initiation complex (PIC). Upon addition of the 50S ribosomal subunit IF-1, IF-2 and IF-3 are released leaving the mature 70S translation initiation complex. The chain is Translation initiation factor IF-1 from Syntrophus aciditrophicus (strain SB).